A 202-amino-acid polypeptide reads, in one-letter code: LexA repressor (202 aa).

A DNA-binding region (H-T-H motif) is located at residues R28–K48. Active-site for autocatalytic cleavage activity residues include S119 and K156.

It belongs to the peptidase S24 family. In terms of assembly, homodimer.

The catalysed reaction is Hydrolysis of Ala-|-Gly bond in repressor LexA.. Its function is as follows. Represses a number of genes involved in the response to DNA damage (SOS response), including recA and lexA. Binds to the 16 bp palindromic sequence 5'-CTGTATATATATACAG-3'. In the presence of single-stranded DNA, RecA interacts with LexA causing an autocatalytic cleavage which disrupts the DNA-binding part of LexA, leading to derepression of the SOS regulon and eventually DNA repair. The polypeptide is LexA repressor (Yersinia pseudotuberculosis serotype O:1b (strain IP 31758)).